The primary structure comprises 60 residues: UPF0434 protein CKO_02153 (60 aa).

This sequence belongs to the UPF0434 family.

The polypeptide is UPF0434 protein CKO_02153 (Citrobacter koseri (strain ATCC BAA-895 / CDC 4225-83 / SGSC4696)).